We begin with the raw amino-acid sequence, 496 residues long: Fatty acyl-CoA reductase 8 (496 aa).

It belongs to the fatty acyl-CoA reductase family.

The catalysed reaction is a long-chain fatty acyl-CoA + 2 NADPH + 2 H(+) = a long-chain primary fatty alcohol + 2 NADP(+) + CoA. Catalyzes the reduction of fatty acyl-CoA to fatty alcohols. Catalyzes specifically the formation of C16:0 fatty alcohol. The sequence is that of Fatty acyl-CoA reductase 8 (FAR8) from Arabidopsis thaliana (Mouse-ear cress).